Here is a 198-residue protein sequence, read N- to C-terminus: Small ribosomal subunit protein uS4 (198 aa).

The region spanning 91–151 (SRLDNIVYRL…EKSKNLKIVE (61 aa)) is the S4 RNA-binding domain.

The protein belongs to the universal ribosomal protein uS4 family. In terms of assembly, part of the 30S ribosomal subunit. Contacts protein S5. The interaction surface between S4 and S5 is involved in control of translational fidelity.

One of the primary rRNA binding proteins, it binds directly to 16S rRNA where it nucleates assembly of the body of the 30S subunit. In terms of biological role, with S5 and S12 plays an important role in translational accuracy. The chain is Small ribosomal subunit protein uS4 from Phytoplasma australiense.